Consider the following 597-residue polypeptide: Centrosomal protein of 70 kDa (597 aa).

The tract at residues 1–23 is disordered; that stretch reads MFPVAPKPQDSSQASDRLMTEKQ. Coiled coils occupy residues 66–179 and 254–326; these read MRQN…QMEV and TYKG…KKAE. Residues 483-516 form a TPR repeat; sequence NGVYPRMNEVYTRLGEMNNAVRNLQELLELDSSS.

Directly interacts with tubulin-gamma; this interaction determines centrosomal localization.

The protein localises to the cytoplasm. Its subcellular location is the cytoskeleton. It localises to the microtubule organizing center. The protein resides in the centrosome. In terms of biological role, plays a role in the organization of both preexisting and nascent microtubules in interphase cells. During mitosis, required for the organization and orientation of the mitotic spindle. The chain is Centrosomal protein of 70 kDa (CEP70) from Pongo abelii (Sumatran orangutan).